The sequence spans 636 residues: Threonine--tRNA ligase (636 aa).

The 61-residue stretch at 1-61 (MINITLPDGK…ETDASVVFIT (61 aa)) folds into the TGS domain. The segment at 238 to 528 (DHRKLGTALD…LIEHYAGKFP (291 aa)) is catalytic. 3 residues coordinate Zn(2+): Cys-329, His-380, and His-505.

This sequence belongs to the class-II aminoacyl-tRNA synthetase family. Homodimer. It depends on Zn(2+) as a cofactor.

Its subcellular location is the cytoplasm. The enzyme catalyses tRNA(Thr) + L-threonine + ATP = L-threonyl-tRNA(Thr) + AMP + diphosphate + H(+). In terms of biological role, catalyzes the attachment of threonine to tRNA(Thr) in a two-step reaction: L-threonine is first activated by ATP to form Thr-AMP and then transferred to the acceptor end of tRNA(Thr). Also edits incorrectly charged L-seryl-tRNA(Thr). This Desulfatibacillum aliphaticivorans protein is Threonine--tRNA ligase.